The sequence spans 33 residues: Cytochrome c oxidase subunit 5B liver, mitochondrial (33 aa).

This sequence belongs to the cytochrome c oxidase subunit 5B family. As to quaternary structure, component of the cytochrome c oxidase (complex IV, CIV), a multisubunit enzyme composed of 14 subunits. The complex is composed of a catalytic core of 3 subunits MT-CO1, MT-CO2 and MT-CO3, encoded in the mitochondrial DNA, and 11 supernumerary subunits COX4I, COX5A, COX5B, COX6A, COX6B, COX6C, COX7A, COX7B, COX7C, COX8 and NDUFA4, which are encoded in the nuclear genome. The complex exists as a monomer or a dimer and forms supercomplexes (SCs) in the inner mitochondrial membrane with NADH-ubiquinone oxidoreductase (complex I, CI) and ubiquinol-cytochrome c oxidoreductase (cytochrome b-c1 complex, complex III, CIII), resulting in different assemblies (supercomplex SCI(1)III(2)IV(1) and megacomplex MCI(2)III(2)IV(2)).

It is found in the mitochondrion inner membrane. The protein operates within energy metabolism; oxidative phosphorylation. Functionally, component of the cytochrome c oxidase, the last enzyme in the mitochondrial electron transport chain which drives oxidative phosphorylation. The respiratory chain contains 3 multisubunit complexes succinate dehydrogenase (complex II, CII), ubiquinol-cytochrome c oxidoreductase (cytochrome b-c1 complex, complex III, CIII) and cytochrome c oxidase (complex IV, CIV), that cooperate to transfer electrons derived from NADH and succinate to molecular oxygen, creating an electrochemical gradient over the inner membrane that drives transmembrane transport and the ATP synthase. Cytochrome c oxidase is the component of the respiratory chain that catalyzes the reduction of oxygen to water. Electrons originating from reduced cytochrome c in the intermembrane space (IMS) are transferred via the dinuclear copper A center (CU(A)) of subunit 2 and heme A of subunit 1 to the active site in subunit 1, a binuclear center (BNC) formed by heme A3 and copper B (CU(B)). The BNC reduces molecular oxygen to 2 water molecules using 4 electrons from cytochrome c in the IMS and 4 protons from the mitochondrial matrix. This is Cytochrome c oxidase subunit 5B liver, mitochondrial from Oncorhynchus mykiss (Rainbow trout).